A 176-amino-acid chain; its full sequence is 3-hydroxydecanoyl-[acyl-carrier-protein] dehydratase (176 aa).

His-71 is a catalytic residue.

Belongs to the thioester dehydratase family. FabA subfamily. In terms of assembly, homodimer.

Its subcellular location is the cytoplasm. The enzyme catalyses a (3R)-hydroxyacyl-[ACP] = a (2E)-enoyl-[ACP] + H2O. The catalysed reaction is (3R)-hydroxydecanoyl-[ACP] = (2E)-decenoyl-[ACP] + H2O. It carries out the reaction (2E)-decenoyl-[ACP] = (3Z)-decenoyl-[ACP]. It participates in lipid metabolism; fatty acid biosynthesis. Its function is as follows. Necessary for the introduction of cis unsaturation into fatty acids. Catalyzes the dehydration of (3R)-3-hydroxydecanoyl-ACP to E-(2)-decenoyl-ACP and then its isomerization to Z-(3)-decenoyl-ACP. Can catalyze the dehydratase reaction for beta-hydroxyacyl-ACPs with saturated chain lengths up to 16:0, being most active on intermediate chain length. The chain is 3-hydroxydecanoyl-[acyl-carrier-protein] dehydratase from Rhodopseudomonas palustris (strain BisB18).